The sequence spans 115 residues: Nucleoid-associated protein tlr0723 (115 aa).

This sequence belongs to the YbaB/EbfC family. In terms of assembly, homodimer.

Its subcellular location is the cytoplasm. The protein localises to the nucleoid. Functionally, binds to DNA and alters its conformation. May be involved in regulation of gene expression, nucleoid organization and DNA protection. The polypeptide is Nucleoid-associated protein tlr0723 (Thermosynechococcus vestitus (strain NIES-2133 / IAM M-273 / BP-1)).